A 261-amino-acid chain; its full sequence is Small ribosomal subunit protein uS2 (261 aa).

S2 is modified (N-acetylserine). The interval 215 to 261 is disordered; sequence AEEAKTTEDVEEAAPVDADEWTGETEEVDWAESGATPAVEDAAASNW. Over residues 223–244 the composition is skewed to acidic residues; the sequence is DVEEAAPVDADEWTGETEEVDW.

This sequence belongs to the universal ribosomal protein uS2 family. As to quaternary structure, component of the small ribosomal subunit. Mature ribosomes consist of a small (40S) and a large (60S) subunit. The 40S subunit contains about 33 different proteins and 1 molecule of RNA (18S). The 60S subunit contains about 49 different proteins and 3 molecules of RNA (25S, 5.8S and 5S). Interacts with RPS21.

Its subcellular location is the cytoplasm. Required for the assembly and/or stability of the 40S ribosomal subunit. Required for the processing of the 20S rRNA-precursor to mature 18S rRNA in a late step of the maturation of 40S ribosomal subunits. This is Small ribosomal subunit protein uS2 from Scheffersomyces stipitis (strain ATCC 58785 / CBS 6054 / NBRC 10063 / NRRL Y-11545) (Yeast).